Consider the following 1693-residue polypeptide: Non-structural polyprotein pORF1 (1693 aa).

Residues 56 to 240 (VFRPEVFWNH…HDVSNLRSWI (185 aa)) form the Alphavirus-like MT domain. The tract at residues 60-240 (EVFWNHPIQR…HDVSNLRSWI (181 aa)) is methyltransferase. Residues 241 to 439 (RTTKVTGDHP…FYAQCRRWLS (199 aa)) form a Y-domain region. A disulfide bridge connects residues Cys434 and Cys481. Residues 442-509 (FHLDPRVLVF…EAYEGSDVDP (68 aa)) are putative protease. A zinc-binding region spans residues 510–691 (AESAISDISG…FSPGHVWESA (182 aa)). 3 residues coordinate Zn(2+): His671, Glu673, and His686. Residues 712–778 (SSPARPDLGF…AITHQTARHR (67 aa)) are hinge. The interval 732–768 (ATPTLAAPLPPPAPDPSPPPSAPALAEPASGATAGAP) is disordered. Residues 739-753 (PLPPPAPDPSPPPSA) are compositionally biased toward pro residues. The span at 754–768 (PALAEPASGATAGAP) shows a compositional bias: low complexity. The region spanning 775–921 (ARHRRLLFTY…LYLPELAARW (147 aa)) is the Macro domain. The interval 785–942 (PDGSKVFAGS…TITEDVARTA (158 aa)) is X-domain. The (+)RNA virus helicase ATP-binding domain occupies 934-1082 (ITEDVARTAN…RPDLGPTSWW (149 aa)). The NTPase/helicase stretch occupies residues 960 to 1204 (GCRVTPGVVQ…ISDAIVNNFF (245 aa)). Position 975 to 982 (975 to 982 (GVPGSGKS)) interacts with ATP. Residues 1083–1216 (HVTHRWPADV…GGEIGHQRPS (134 aa)) enclose the (+)RNA virus helicase C-terminal domain. Residues 1207–1693 (GGEIGHQRPS…LTNSILCRVE (487 aa)) form an RNA-directed RNA polymerase region. A RdRp catalytic domain is found at 1454–1565 (SMVFENDFSE…LCSEYRQSPG (112 aa)).

Belongs to the hepevirus non-structural polyprotein family. The protease domain interacts with host EIF2AK4 (via C-terminus); this interaction inhibits dimerization of EIF2AK4 and prevents EIF2AK4-mediated phosphorylation of host EIF2A. The cofactor is Mg(2+). In terms of processing, ORF1 polyprotein does not seem to be processed into distinct enzymatic domains by a viral protease belonging to ORF1, but could be processed by a host serine protease like thrombin.

The protein resides in the host cytoplasm. It localises to the host perinuclear region. The enzyme catalyses RNA(n) + a ribonucleoside 5'-triphosphate = RNA(n+1) + diphosphate. The catalysed reaction is GTP + S-adenosyl-L-methionine = N(7)-methyl-GTP + S-adenosyl-L-homocysteine. Its activity is regulated as follows. Putative protease: Inhibited by chymostatin. Functionally, methyltransferase: Displays a capping enzyme activity. This function is necessary since all viral RNAs are synthesized in the cytoplasm, and host capping enzymes are restricted to the nucleus. The enzymatic reaction involves a covalent link between 7-methyl-GMP and the methyltransferase, whereas eukaryotic capping enzymes form a covalent complex only with GMP. Methyltransferase catalyzes transfer of a methyl group from S-adenosylmethionine to GTP and GDP to yield m(7)GTP or m(7)GDP. GDP is a better substrate than GTP. This enzyme also displays guanylyltransferase activity to form a covalent complex, methyltransferase-m(7)GMP, from which 7-methyl-GMP is transferred to the mRNA to create the cap structure. Its function is as follows. Y-domain: Indispensable for virus replication. In terms of biological role, putative protease: The putative protease domain although necessary for replication of the virus may not be a protease but rather a structural Zn(2+)-binding domain. Inhibits induction of IFN-beta by MDA5 and RIG-I pathways and down-regulates the expression of MDA5. NTPase/helicase: Multi-functional protein that exhibits NTPase and RNA unwinding activities. Hydrolyzes all NTPs efficiently and unwinds RNA duplexes containing 5' overhangs. Possesses a sequence independent RNA-5'-triphosphatase (RTPase) activity suggestive of its role in forming viral cap structure. Also participates in viral genome replication, RNA translocation and genome packaging/unpackaging. Functionally, RNA-directed RNA polymerase: Plays an essential role in the virus replication. Binds to the 3'-end of the genomic RNA to initiate viral replication. This chain is Non-structural polyprotein pORF1, found in Homo sapiens (Human).